The chain runs to 680 residues: Methionine--tRNA ligase (680 aa).

Positions 14–24 (PYANGPIHLGH) match the 'HIGH' region motif. Zn(2+)-binding residues include cysteine 145, cysteine 148, cysteine 158, and cysteine 161. The short motif at 330 to 334 (KMSKS) is the 'KMSKS' region element. An ATP-binding site is contributed by lysine 333. Residues 579–680 (DFAKVDFRIA…DGAQPGMRVK (102 aa)) enclose the tRNA-binding domain.

This sequence belongs to the class-I aminoacyl-tRNA synthetase family. MetG type 1 subfamily. As to quaternary structure, homodimer. The cofactor is Zn(2+).

It localises to the cytoplasm. It carries out the reaction tRNA(Met) + L-methionine + ATP = L-methionyl-tRNA(Met) + AMP + diphosphate. Its function is as follows. Is required not only for elongation of protein synthesis but also for the initiation of all mRNA translation through initiator tRNA(fMet) aminoacylation. The sequence is that of Methionine--tRNA ligase from Hydrogenovibrio crunogenus (strain DSM 25203 / XCL-2) (Thiomicrospira crunogena).